The following is a 241-amino-acid chain: Proteasome subunit alpha type-5 (241 aa).

Belongs to the peptidase T1A family. In terms of assembly, the 26S proteasome consists of a 20S proteasome core and two 19S regulatory subunits. The 20S proteasome core is composed of 28 subunits that are arranged in four stacked rings, resulting in a barrel-shaped structure. The two end rings are each formed by seven alpha subunits, and the two central rings are each formed by seven beta subunits. The catalytic chamber with the active sites is on the inside of the barrel.

It is found in the cytoplasm. The protein resides in the nucleus. Its function is as follows. The proteasome is a multicatalytic proteinase complex which is characterized by its ability to cleave peptides with Arg, Phe, Tyr, Leu, and Glu adjacent to the leaving group at neutral or slightly basic pH. The proteasome has an ATP-dependent proteolytic activity. The protein is Proteasome subunit alpha type-5 (psmA5) of Dictyostelium discoideum (Social amoeba).